A 368-amino-acid polypeptide reads, in one-letter code: Phospho-N-acetylmuramoyl-pentapeptide-transferase (368 aa).

10 consecutive transmembrane segments (helical) span residues 34-54, 79-99, 102-122, 140-160, 176-196, 207-227, 247-267, 271-291, 296-316, and 345-365; these read GAVV…IDHL, TPTM…VLWA, LNPY…VGFY, ARLL…VRLG, LVIK…VGAG, GLAI…AYLA, LAVL…FNAP, IFMG…IAVA, IVLA…IVQV, and QIVI…LSTL.

It belongs to the glycosyltransferase 4 family. MraY subfamily. It depends on Mg(2+) as a cofactor.

The protein resides in the cell inner membrane. The enzyme catalyses UDP-N-acetyl-alpha-D-muramoyl-L-alanyl-gamma-D-glutamyl-meso-2,6-diaminopimeloyl-D-alanyl-D-alanine + di-trans,octa-cis-undecaprenyl phosphate = di-trans,octa-cis-undecaprenyl diphospho-N-acetyl-alpha-D-muramoyl-L-alanyl-D-glutamyl-meso-2,6-diaminopimeloyl-D-alanyl-D-alanine + UMP. Its pathway is cell wall biogenesis; peptidoglycan biosynthesis. Functionally, catalyzes the initial step of the lipid cycle reactions in the biosynthesis of the cell wall peptidoglycan: transfers peptidoglycan precursor phospho-MurNAc-pentapeptide from UDP-MurNAc-pentapeptide onto the lipid carrier undecaprenyl phosphate, yielding undecaprenyl-pyrophosphoryl-MurNAc-pentapeptide, known as lipid I. This Bradyrhizobium sp. (strain ORS 278) protein is Phospho-N-acetylmuramoyl-pentapeptide-transferase.